Here is a 417-residue protein sequence, read N- to C-terminus: Serine hydroxymethyltransferase 2 (417 aa).

Residues Leu-121 and 125–127 each bind (6S)-5,6,7,8-tetrahydrofolate; that span reads GHL. The residue at position 230 (Lys-230) is an N6-(pyridoxal phosphate)lysine. Position 355–357 (355–357) interacts with (6S)-5,6,7,8-tetrahydrofolate; sequence SPF.

Belongs to the SHMT family. In terms of assembly, homodimer. Requires pyridoxal 5'-phosphate as cofactor.

Its subcellular location is the cytoplasm. It catalyses the reaction (6R)-5,10-methylene-5,6,7,8-tetrahydrofolate + glycine + H2O = (6S)-5,6,7,8-tetrahydrofolate + L-serine. Its pathway is one-carbon metabolism; tetrahydrofolate interconversion. The protein operates within amino-acid biosynthesis; glycine biosynthesis; glycine from L-serine: step 1/1. In terms of biological role, catalyzes the reversible interconversion of serine and glycine with tetrahydrofolate (THF) serving as the one-carbon carrier. This reaction serves as the major source of one-carbon groups required for the biosynthesis of purines, thymidylate, methionine, and other important biomolecules. Also exhibits THF-independent aldolase activity toward beta-hydroxyamino acids, producing glycine and aldehydes, via a retro-aldol mechanism. The chain is Serine hydroxymethyltransferase 2 from Pseudomonas syringae pv. syringae (strain B728a).